A 95-amino-acid chain; its full sequence is Acylphosphatase (95 aa).

The Acylphosphatase-like domain occupies 10 to 95 (CIHVTVSGKV…VEDYSDFRVR (86 aa)). Catalysis depends on residues Arg-25 and Asn-43.

The protein belongs to the acylphosphatase family.

The catalysed reaction is an acyl phosphate + H2O = a carboxylate + phosphate + H(+). This is Acylphosphatase (acyP) from Coxiella burnetii (strain RSA 493 / Nine Mile phase I).